The following is a 410-amino-acid chain: Metacaspase-1 (410 aa).

A disordered region spans residues M1–S94. Composition is skewed to low complexity over residues A21 to P47 and N55 to P64. Gly residues predominate over residues Q65–G75. The span at M80–S94 shows a compositional bias: polar residues. Catalysis depends on residues H200 and C256.

The protein belongs to the peptidase C14B family.

Involved in cell death (apoptosis). This is Metacaspase-1 (MCA1) from Meyerozyma guilliermondii (strain ATCC 6260 / CBS 566 / DSM 6381 / JCM 1539 / NBRC 10279 / NRRL Y-324) (Yeast).